Here is a 618-residue protein sequence, read N- to C-terminus: uncharacterized protein (618 aa).

Positions 1 to 29 (MSFLVLPPEVNSALMFAGAGSGPTLAAAA) are cleaved as a signal peptide. The interval 598–618 (SGDNSSGGFNAGNDQSGFFDG) is disordered.

This sequence belongs to the mycobacterial PPE family.

This is an uncharacterized protein from Mycobacterium tuberculosis (strain ATCC 25618 / H37Rv).